Reading from the N-terminus, the 338-residue chain is Envelope glycoprotein K (338 aa).

A signal peptide spans 1-30 (MLAVRSLQHLSTVVLITAYGLVLVWYTVFG). Over 31–121 (ASPLHRCIYA…VNCLETLWYT (91 aa)) the chain is Extracellular. An involved in fusion region spans residues 31 to 121 (ASPLHRCIYA…VNCLETLWYT (91 aa)). 2 N-linked (GlcNAc...) asparagine; by host glycosylation sites follow: Asn48 and Asn58. The helical transmembrane segment at 122–140 (RVRLVVVGWFLYLAFVALH) threads the bilayer. The Cytoplasmic segment spans residues 141 to 212 (QRRCMFGVVS…DPVTFLYHRP (72 aa)). A helical membrane pass occupies residues 213–233 (AIGVIVGCELIVRFVAVGLIV). Topologically, residues 234 to 243 (GTAFISRGAC) are extracellular. The chain crosses the membrane as a helical span at residues 244-264 (AITYPLFLTITTWCFVSTIGL). At 265-301 (TELYCILRRGPAPKNADKAAAPGRSKGLSGVCGRCCS) the chain is on the cytoplasmic side. An interaction with UL20 region spans residues 265 to 301 (TELYCILRRGPAPKNADKAAAPGRSKGLSGVCGRCCS). A helical membrane pass occupies residues 302–322 (IILSGIAMRLCYIAVVAGVVL). The Extracellular portion of the chain corresponds to 323-338 (VALHYEQEIQRRLFDV).

The protein belongs to the alphaherpesvirinae glycoprotein K family. In terms of assembly, interacts (via UL20 interaction region) with protein UL20 (via N-terminus); this interaction probably plays a role in the coordinate transport of protein UL20 and gK to the trans-Golgi network (TGN), and is required for the cell surface expression of gK. In terms of processing, N-glycosylated.

Its subcellular location is the host cell membrane. It localises to the host endosome membrane. The protein localises to the host Golgi apparatus membrane. Glycoprotein that probably modulates membrane fusion events during secondary envelopment of cytoplasmic capsids that bud into specific trans-Golgi network (TGN)-derived membranes. Also plays a role, together with gB, in virus-induced cell-to-cell fusion (syncytia formation). Seems to block fusion of virions with infected-cell membranes. The protein is Envelope glycoprotein K (gK) of Homo sapiens (Human).